The chain runs to 106 residues: Insulin-like peptide 04 (106 aa).

Residues 1-22 form the signal peptide; it reads MPRTFLVVLIYILAGFLCSTSA. The propeptide occupies 23–37; that stretch reads LRKVNEASGIKTDGS. 3 disulfides stabilise this stretch: C45/C50, C46/C80, and C59/C68. A propeptide spans 86–106 (c peptide); that stretch reads RRKRSLTVDKREAKKFIRQRR.

The protein belongs to the insulin family.

The protein resides in the secreted. In terms of biological role, insulin decreases blood glucose concentration. May have evolved to activate insulin receptors (INSR) in vertebrates. Molecular docking studies reveals unique interaction with the human insulin receptor. In vivo, insulin-like peptide injection reduces blood glucose levels in two models of zebrafish diabetes (streptozotocin- and glucose-induced). Also shorter swimming distance of zebrafish larvae, an effect which is not observed with human insulin. This Exaiptasia diaphana (Tropical sea anemone) protein is Insulin-like peptide 04.